We begin with the raw amino-acid sequence, 2103 residues long: Orsellinic acid synthase (2103 aa).

An N-terminal acylcarrier protein transacylase domain (SAT) region spans residues Asp-17–Ile-232. A Ketosynthase family 3 (KS3) domain is found at Ala-348–Asp-782. Active-site for beta-ketoacyl synthase activity residues include Cys-525, His-660, and His-702. A malonyl-CoA:ACP transacylase (MAT) domain region spans residues Val-881–Val-1197. The active-site For acyl/malonyl transferase activity is the Ser-973. The interval His-1272 to Asp-1409 is N-terminal hotdog fold. In terms of domain architecture, PKS/mFAS DH spans His-1272–Ala-1582. Positions Gly-1303–Asp-1579 are product template (PT) domain. His-1304 (proton acceptor; for dehydratase activity) is an active-site residue. Residues Val-1433 to Ala-1582 form a C-terminal hotdog fold region. The active-site Proton donor; for dehydratase activity is Asp-1493. Positions Ser-1592 to Asp-1638 are disordered. Composition is skewed to low complexity over residues Lys-1594–Ser-1603 and Pro-1617–Pro-1631. Carrier domains are found at residues Val-1640 to Ala-1716 and Pro-1741 to Ala-1815. Ser-1676 carries the post-translational modification O-(pantetheine 4'-phosphoryl)serine. Positions Glu-1722–Pro-1743 are disordered. O-(pantetheine 4'-phosphoryl)serine is present on Ser-1775. Residues Glu-1809–Arg-1838 are disordered. Positions Ala-1810–Ser-1819 are enriched in acidic residues. The span at Gln-1823–Ser-1836 shows a compositional bias: polar residues. The thioesterase (TE) domain stretch occupies residues Ala-1849–Met-2082.

The catalysed reaction is 3 malonyl-CoA + acetyl-CoA + 2 H(+) = orsellinate + 3 CO2 + 4 CoA. It functions in the pathway secondary metabolite biosynthesis. Functionally, non-reducing polyketide synthase; part of the gene cluster that mediates the biosynthesis of orsellinic acid, as well as of the cathepsin K inhibitors F9775 A and F9775 B. The non-reducing polyketide synthase orsA produces orsellinic acid by condensing acetyl-CoA with 3 malonyl-CoA units. Further modifications by the decarboxylase orsB and the tyrosinase-like protein orsC lead to the production of F9775 A and F9775 B. The functions of orsD and orsE remain unclear since only orsB and orsC are required to convert orsellinic acid into F9775 A and F9775 B. In Emericella nidulans (strain FGSC A4 / ATCC 38163 / CBS 112.46 / NRRL 194 / M139) (Aspergillus nidulans), this protein is Orsellinic acid synthase.